The sequence spans 639 residues: Sperm-associated antigen 16 protein (639 aa).

Residues 146–218 are a coiled coil; the sequence is DVYSQVMLLE…GLKLHYASYE (73 aa). The tract at residues 280–333 is disordered; the sequence is RESGDRAGHSCEKENSSEGPTQKSLREAREEVGYKSKLKNEKKDSEFPVDMQPD. Basic and acidic residues-rich tracts occupy residues 281–295 and 303–325; these read ESGD…KENS and SLRE…KDSE. WD repeat units follow at residues 358–397, 400–439, 442–481, 484–523, 526–565, 568–608, and 609–639; these read LHEL…VLLT, GHTD…CTLT, GHNH…CRYT, GHTD…CEQS, GHMH…PIVS, VGPS…HKLV, and GHES…RLWI.

In terms of assembly, interacts with SPAG6 and STK36. Post-translationally, phosphorylated by TSSK2. In terms of tissue distribution, expressed in testis.

The protein localises to the cytoplasm. It is found in the cytoskeleton. The protein resides in the cilium axoneme. Its subcellular location is the flagellum axoneme. It localises to the cell projection. The protein localises to the cilium. It is found in the flagellum. Necessary for sperm flagellar function. Plays a role in motile ciliogenesis. May help to recruit STK36 to the cilium or apical surface of the cell to initiate subsequent steps of construction of the central pair apparatus of motile cilia. This is Sperm-associated antigen 16 protein (Spag16) from Mus musculus (Mouse).